The sequence spans 321 residues: Putrescine export system permease protein SapB (321 aa).

Over 1-8 (MIIFTLRR) the chain is Cytoplasmic. Residues 9–29 (ILLLIVTLFLLTFVGFSLSYF) traverse the membrane as a helical segment. Residues 30–80 (TPHAPLQGASLWNAWVFWFNGLIHWDFGVSSINGQPIAEQLKEVFPATMEL) are Periplasmic-facing. An ABC transmembrane type-1 domain is found at 74–302 (FPATMELCIL…SLVIIVNVIS (229 aa)). The chain crosses the membrane as a helical span at residues 81-101 (CILAFGFALIVGIPVGMIAGI). The Cytoplasmic segment spans residues 102-112 (TRHKWQDNLIN). A helical transmembrane segment spans residues 113 to 133 (AIALLGFSIPVFWLALLLTLF). Topologically, residues 134 to 174 (CSLTLGWLPVSGRFDLLYEVKPITGFALIDAWLSDSPWRDE) are periplasmic. A helical transmembrane segment spans residues 175–195 (MIMSAIRHMILPVITLSVAPT). Over 196–248 (TEVIRLMRISTIEVYDQNYVKAAATRGLSRFTILRRHVLHNALPPVIPRLGLQ) the chain is Cytoplasmic. A helical transmembrane segment spans residues 249–269 (FSTMLTLAMITEMVFSWPGLG). At 270–280 (RWLINAIRQQD) the chain is on the periplasmic side. Residues 281–301 (YAAISAGVMVCGSLVIIVNVI) traverse the membrane as a helical segment. Topologically, residues 302-321 (SDILGAMANPLKHKEWYALR) are cytoplasmic.

Belongs to the binding-protein-dependent transport system permease family. OppBC subfamily.

The protein resides in the cell inner membrane. Part of a putrescine export transport system, does not play a role in resistance to antimicrobial peptides. In Escherichia coli (strain K12), this protein is Putrescine export system permease protein SapB (sapB).